Here is a 162-residue protein sequence, read N- to C-terminus: MATDVAFDTSMGSFTVELYNAHAPKTCKNFATLAQRGYYNNVIFHRIIPNFMVQTGDPTGTGRGGSSIYGEKFEDEINPNLKHTGAGILSMANSGPNNNGSQFFITLAPQPWLDGKHTIFGRVKSGMRVIQRMGLVKTNSEDRPVDGVKILRARIVEETGDE.

The PPIase cyclophilin-type domain maps to 1 to 155 (MATDVAFDTS…DGVKILRARI (155 aa)).

This sequence belongs to the cyclophilin-type PPIase family. PPIL1 subfamily.

It catalyses the reaction [protein]-peptidylproline (omega=180) = [protein]-peptidylproline (omega=0). In terms of biological role, PPIases accelerate the folding of proteins. It catalyzes the cis-trans isomerization of proline imidic peptide bonds in oligopeptides. This Aspergillus niger protein is Peptidyl-prolyl cis-trans isomerase-like 1 (cypC).